Consider the following 333-residue polypeptide: Biotin synthase (333 aa).

In terms of domain architecture, Radical SAM core spans 40–269 (YRVQLASLLS…HARVRLSAGR (230 aa)). [4Fe-4S] cluster is bound by residues Cys55, Cys59, and Cys62. Positions 100, 132, 192, and 264 each coordinate [2Fe-2S] cluster.

The protein belongs to the radical SAM superfamily. Biotin synthase family. As to quaternary structure, homodimer. [4Fe-4S] cluster serves as cofactor. The cofactor is [2Fe-2S] cluster.

It catalyses the reaction (4R,5S)-dethiobiotin + (sulfur carrier)-SH + 2 reduced [2Fe-2S]-[ferredoxin] + 2 S-adenosyl-L-methionine = (sulfur carrier)-H + biotin + 2 5'-deoxyadenosine + 2 L-methionine + 2 oxidized [2Fe-2S]-[ferredoxin]. Its pathway is cofactor biosynthesis; biotin biosynthesis; biotin from 7,8-diaminononanoate: step 2/2. In terms of biological role, catalyzes the conversion of dethiobiotin (DTB) to biotin by the insertion of a sulfur atom into dethiobiotin via a radical-based mechanism. This is Biotin synthase from Synechococcus sp. (strain CC9902).